A 136-amino-acid polypeptide reads, in one-letter code: MARKIFKFRGYTLEELQEMSLDEVIELLPSRQRRSLKRGFLPRQEKVLDKMEKVKDMKNDSGRPIVIKTHCRDMIVLPNMVGYTFGIYNGQEFVEVTIQPEMIGCYFGEFAQTRGRVQHGDPGMGATRSSMFVPLK.

Belongs to the universal ribosomal protein uS19 family.

Its function is as follows. Protein S19 forms a complex with S13 that binds strongly to the 16S ribosomal RNA. This Methanosphaera stadtmanae (strain ATCC 43021 / DSM 3091 / JCM 11832 / MCB-3) protein is Small ribosomal subunit protein uS19.